Here is a 965-residue protein sequence, read N- to C-terminus: Valine--tRNA ligase (965 aa).

Residues 1 to 22 are disordered; it reads MENTPSHINKTEPSLDKTYSPQ. Positions 56–66 match the 'HIGH' region motif; it reads PNVTGSLHMGH. Residues 568-572 carry the 'KMSKS' region motif; that stretch reads KMSKS. Lysine 571 is a binding site for ATP. Residues 896–965 adopt a coiled-coil conformation; sequence LIDKATELDR…IEQQATIAAL (70 aa).

The protein belongs to the class-I aminoacyl-tRNA synthetase family. ValS type 1 subfamily. Monomer.

It localises to the cytoplasm. It carries out the reaction tRNA(Val) + L-valine + ATP = L-valyl-tRNA(Val) + AMP + diphosphate. Functionally, catalyzes the attachment of valine to tRNA(Val). As ValRS can inadvertently accommodate and process structurally similar amino acids such as threonine, to avoid such errors, it has a 'posttransfer' editing activity that hydrolyzes mischarged Thr-tRNA(Val) in a tRNA-dependent manner. This chain is Valine--tRNA ligase, found in Yersinia pseudotuberculosis serotype I (strain IP32953).